A 78-amino-acid chain; its full sequence is Large ribosomal subunit protein bL28 (78 aa).

The tract at residues 1 to 20 is disordered; it reads MSRVCQVTGKRPVTGNNRSH.

This sequence belongs to the bacterial ribosomal protein bL28 family.

The chain is Large ribosomal subunit protein bL28 from Vibrio parahaemolyticus serotype O3:K6 (strain RIMD 2210633).